A 186-amino-acid chain; its full sequence is Ribosome-recycling factor (186 aa).

It belongs to the RRF family.

The protein localises to the cytoplasm. In terms of biological role, responsible for the release of ribosomes from messenger RNA at the termination of protein biosynthesis. May increase the efficiency of translation by recycling ribosomes from one round of translation to another. The sequence is that of Ribosome-recycling factor from Bordetella avium (strain 197N).